The sequence spans 348 residues: Alcohol dehydrogenase 1 (348 aa).

The residue at position 2 (Ser-2) is an N-acetylserine. Cys-44 contributes to the Zn(2+) binding site. Residues His-45, Thr-46, and His-49 each contribute to the NAD(+) site. His-67, Glu-68, Cys-98, Cys-101, Cys-104, Cys-112, and Cys-154 together coordinate Zn(2+). 5 residues coordinate NAD(+): Gly-181, Gly-182, Leu-183, Asp-202, and Lys-207. At Ser-213 the chain carries Phosphoserine. Phe-222 lines the NAD(+) pocket. Thr-223 carries the post-translational modification Phosphothreonine. Residues Lys-226 and Lys-234 each participate in a glycyl lysine isopeptide (Lys-Gly) (interchain with G-Cter in ubiquitin) cross-link. NAD(+) is bound by residues Val-269 and Met-271. Phosphoserine is present on Ser-279. Lys-287 participates in a covalent cross-link: Glycyl lysine isopeptide (Lys-Gly) (interchain with G-Cter in ubiquitin). Residues Ser-294 and Val-296 each coordinate NAD(+). Residue Ser-316 is modified to Phosphoserine. A Glycyl lysine isopeptide (Lys-Gly) (interchain with G-Cter in ubiquitin) cross-link involves residue Lys-319. Residue Arg-341 participates in NAD(+) binding.

This sequence belongs to the zinc-containing alcohol dehydrogenase family. As to quaternary structure, homotetramer. Zn(2+) serves as cofactor.

The protein localises to the cytoplasm. The catalysed reaction is a primary alcohol + NAD(+) = an aldehyde + NADH + H(+). The enzyme catalyses a secondary alcohol + NAD(+) = a ketone + NADH + H(+). It carries out the reaction ethanol + NAD(+) = acetaldehyde + NADH + H(+). It catalyses the reaction allyl alcohol + NADP(+) = acrolein + NADPH + H(+). The catalysed reaction is 1-propanol + NAD(+) = propanal + NADH + H(+). The enzyme catalyses butan-1-ol + NAD(+) = butanal + NADH + H(+). It carries out the reaction hexan-1-ol + NAD(+) = hexanal + NADH + H(+). It catalyses the reaction (R)-lactaldehyde + NAD(+) = methylglyoxal + NADH + H(+). The catalysed reaction is octan-1-ol + NAD(+) = octanal + NADH + H(+). The enzyme catalyses butan-2-ol + NAD(+) = butan-2-one + NADH + H(+). It carries out the reaction propan-2-ol + NAD(+) = acetone + NADH + H(+). It catalyses the reaction isobutanol + NAD(+) = 2-methylpropanal + NADH + H(+). Functionally, preferentially fermentative isozyme that reduces acetaldehyde to ethanol during the fermentation of glucose. Major enzyme required for the conversion of acetaldehyde to ethanol. Plays a key role in the carbohydrate metabolism through the regeneration of NAD(+) from glycolytic NADH. In the reverse reaction, preferentially catalyzes the conversion of primary unbranched alcohols to their corresponding aldehydes. Also shows activity toward secondary alcohols. Most active with ethanol, and its activity decreases as the size of the alcohol is increased. The protein is Alcohol dehydrogenase 1 (ADH1) of Saccharomyces cerevisiae (strain ATCC 204508 / S288c) (Baker's yeast).